The sequence spans 317 residues: Melanocyte-stimulating hormone receptor (317 aa).

The Extracellular portion of the chain corresponds to 1–37 (MRVQGSQRRLLGSLNSTPTATPHLGLAANQTGARCLE). N-linked (GlcNAc...) asparagine glycosylation occurs at N29. A helical membrane pass occupies residues 38–63 (VSIPDGLFLSLGLVSLVENVLVVTAI). Residues 64 to 72 (AKNRNLHSP) lie on the Cytoplasmic side of the membrane. The helical transmembrane segment at 73–93 (MYCFICCLALSDLLVSGSNML) threads the bilayer. The Extracellular segment spans residues 94-118 (ETAVTLLLEAGALAARAAVVQQLDN). The helical transmembrane segment at 119–140 (VIDVITCSSMLSSLCFLGAIAV) threads the bilayer. Residues 141–163 (DRYISIFYALRYHSIVTLPRARR) are Cytoplasmic-facing. Residues 164–183 (AIAAIWVASVLCSTLFIAYY) traverse the membrane as a helical segment. The Extracellular portion of the chain corresponds to 184-191 (DHAAVLLC). A helical transmembrane segment spans residues 192 to 211 (LVVFFLAMLVLMAVLYVHML). The Cytoplasmic portion of the chain corresponds to 212 to 240 (ARACQHAQGIARLHKRQRLAHQGFGLKGA). Residues 241-266 (ATLTILLGIFFLCWGPFFLHLTLIVL) traverse the membrane as a helical segment. Residues 267–279 (CPQHPTCSCIFKN) lie on the Extracellular side of the membrane. A helical membrane pass occupies residues 280-300 (FNLFLALIICNAIIDPLIYAF). The Cytoplasmic portion of the chain corresponds to 301-317 (RSQELRRTLKEVLLCSW). Residue C315 is the site of S-palmitoyl cysteine attachment.

It belongs to the G-protein coupled receptor 1 family. As to quaternary structure, interacts with MGRN1, but does not undergo MGRN1-mediated ubiquitination; this interaction competes with GNAS-binding and thus inhibits agonist-induced cAMP production. Interacts with OPN3; the interaction results in a decrease in MC1R-mediated cAMP signaling and ultimately a decrease in melanin production in melanocytes.

The protein resides in the cell membrane. In terms of biological role, receptor for MSH (alpha, beta and gamma) and ACTH. The activity of this receptor is mediated by G proteins which activate adenylate cyclase. Mediates melanogenesis, the production of eumelanin (black/brown) and phaeomelanin (red/yellow), via regulation of cAMP signaling in melanocytes. This chain is Melanocyte-stimulating hormone receptor (MC1R), found in Macaca nigra (Celebes black macaque).